A 183-amino-acid polypeptide reads, in one-letter code: Large ribosomal subunit protein uL22 (183 aa).

The segment at 163 to 183 (KTAAKKQSAKKLKKQKMMYRE) is disordered. Residues 165–183 (AAKKQSAKKLKKQKMMYRE) show a composition bias toward basic residues.

The protein belongs to the universal ribosomal protein uL22 family.

The chain is Large ribosomal subunit protein uL22 (rpl-17) from Pectinaria gouldii (Trumpet worm).